We begin with the raw amino-acid sequence, 151 residues long: Large ribosomal subunit protein bL9 (151 aa).

Belongs to the bacterial ribosomal protein bL9 family.

In terms of biological role, binds to the 23S rRNA. This Francisella tularensis subsp. tularensis (strain FSC 198) protein is Large ribosomal subunit protein bL9.